Reading from the N-terminus, the 804-residue chain is Probable cadmium-transporting ATPase (804 aa).

HMA domains lie at 11 to 74 and 89 to 152; these read DKQV…LKVA and DKNV…LKVI. Residues C22, C25, C100, and C103 each contribute to the Cd(2+) site. 5 helical membrane-spanning segments follow: residues 183–203, 207–227, 248–268, 413–433, and 441–461; these read STLL…FVNG, LVTS…LFKV, IGAA…LFAI, IIMV…GGSW, and LAVL…ISIV. D492 (4-aspartylphosphate intermediate) is an active-site residue. 2 helical membrane passes run 749–771 and 776–798; these read LNII…LLVI and TLWI…SLRL.

Belongs to the cation transport ATPase (P-type) (TC 3.A.3) family. Type IB subfamily.

The protein localises to the cell membrane. The catalysed reaction is Cd(2+)(in) + ATP + H2O = Cd(2+)(out) + ADP + phosphate + H(+). Its function is as follows. Couples the hydrolysis of ATP with the export of cadmium. Involved in cadmium resistance. The chain is Probable cadmium-transporting ATPase (cadA) from Staphylococcus aureus.